The primary structure comprises 146 residues: Large ribosomal subunit protein uL15 (146 aa).

Positions 1 to 54 are disordered; it reads MKLHELKPAAGSKKAPKRIGRGTGSGLGRNAGKGEKGQNARSGGGVRPGFEGGQ. Gly residues-rich tracts occupy residues 21–31 and 42–52; these read RGTGSGLGRNA and SGGGVRPGFEG.

This sequence belongs to the universal ribosomal protein uL15 family. In terms of assembly, part of the 50S ribosomal subunit.

In terms of biological role, binds to the 23S rRNA. In Clostridium beijerinckii (strain ATCC 51743 / NCIMB 8052) (Clostridium acetobutylicum), this protein is Large ribosomal subunit protein uL15.